Consider the following 315-residue polypeptide: Ribosomal RNA small subunit methyltransferase H (315 aa).

Residues 33–35, aspartate 52, phenylalanine 84, aspartate 106, and glutamine 113 each bind S-adenosyl-L-methionine; that span reads GGH. The disordered stretch occupies residues 295-315; it reads SDELEENNRSHSAKLRVAEKL.

It belongs to the methyltransferase superfamily. RsmH family.

The protein localises to the cytoplasm. The catalysed reaction is cytidine(1402) in 16S rRNA + S-adenosyl-L-methionine = N(4)-methylcytidine(1402) in 16S rRNA + S-adenosyl-L-homocysteine + H(+). Its function is as follows. Specifically methylates the N4 position of cytidine in position 1402 (C1402) of 16S rRNA. The polypeptide is Ribosomal RNA small subunit methyltransferase H (Lactobacillus gasseri (strain ATCC 33323 / DSM 20243 / BCRC 14619 / CIP 102991 / JCM 1131 / KCTC 3163 / NCIMB 11718 / NCTC 13722 / AM63)).